The chain runs to 408 residues: GDSL esterase/lipase At1g54790 (408 aa).

The first 24 residues, 1-24 (MNITKMKLFYVILFFISSLQISNS), serve as a signal peptide directing secretion. Residue Ser38 is the Nucleophile of the active site. N-linked (GlcNAc...) asparagine glycans are attached at residues Asn273, Asn289, and Asn361. Catalysis depends on residues Asp370 and His373.

Belongs to the 'GDSL' lipolytic enzyme family.

The protein localises to the secreted. The sequence is that of GDSL esterase/lipase At1g54790 from Arabidopsis thaliana (Mouse-ear cress).